Consider the following 964-residue polypeptide: MNSTLQNRNRTNLERVSTDPLDTFPRRHIGPDSQQVDKMLKSLGLSSLEELVDKAVPAGIRLKKEPDLPKASTEHKILQDLKNIASQNQIFRSYIGAGYNACIIPGVIQRNILENPGWYTAYTPYQAEISQGRLEALLNFQTMIIDLTGLEISNASLLDEGTAAAEAMFLAYSIRKNEIAKKFFVSELCHPQTIDVVVTRANPLGIEIVIGNHESVELNEDFFGVLLQYPATDGKIIDYTSFIQRAHNVGAISTVAADLLALTLLKSPGEMGADIAVGSSQRFGLPLGFGGPHAGYFATKDEFKRSMPGRLIGVSKDSQGNPGLRLSLQTREQHIRRDKATSNICTAQVLLAVISSMYAVYHGPEGLKDIATRIHKFTSILADALKSSGFTISNDTFFDTITIQAGAKAKDILNRARSERINLREYKDGRIGIALDETVNSDDIKDLFKIFEVKNTDIEKLFSNSGNISDSFKRSTSYLTHPVFQSFHTETKMLRYIRKLESRDLSLTTSMIPLGSCTMKLNATTEMYPVTWPEFGAIHPFAPSEQTKGYKIIFEQLEKWLCEITGFAGVSLQPNAGSQGEYAGLLAIRRYHESRKETHRNVCLIPISAHGTNPASAAMAGFKVVVVSCDQNGNVDLEDLKIKAEEHKNDLAALMITYPSTHGVFEESVKEICQIVHSRGGQVYMDGANMNAQVGLTSPGEIGADVCHLNLHKTFCIPHGGGGPGVGPIGVAKHLVPFLPGHVLVDNTTGNEHGAVSAAPWGSASIVLISWIYIALMGSEGLTNATRISILNANYIAKRLEKAYPVLYKGKNGFVAHECILDVRPFKKSAEIEVEDVAKRLIDYGFHAPTMSFPVPGTLMIEPTESESLEELDRFCEAMLLIHQEILDVQNGTLDKIDNPLKNSPHTAAMTTSDRWDHLYPKERAAYPAPWSRDHKFWPFVGRVDNVYGDRNLVCSCLPVESYQ.

A compositionally biased stretch (polar residues) spans 1 to 10 (MNSTLQNRNR). A disordered region spans residues 1-25 (MNSTLQNRNRTNLERVSTDPLDTFP). Lysine 713 bears the N6-(pyridoxal phosphate)lysine mark.

The protein belongs to the GcvP family. The glycine cleavage system is composed of four proteins: P, T, L and H. Pyridoxal 5'-phosphate serves as cofactor.

It catalyses the reaction N(6)-[(R)-lipoyl]-L-lysyl-[glycine-cleavage complex H protein] + glycine + H(+) = N(6)-[(R)-S(8)-aminomethyldihydrolipoyl]-L-lysyl-[glycine-cleavage complex H protein] + CO2. Its function is as follows. The glycine cleavage system catalyzes the degradation of glycine. The P protein binds the alpha-amino group of glycine through its pyridoxal phosphate cofactor; CO(2) is released and the remaining methylamine moiety is then transferred to the lipoamide cofactor of the H protein. This chain is Glycine dehydrogenase (decarboxylating), found in Leptospira borgpetersenii serovar Hardjo-bovis (strain JB197).